A 331-amino-acid chain; its full sequence is Adenosine deaminase (331 aa).

Zn(2+) is bound by residues histidine 12 and histidine 14. Substrate-binding residues include histidine 14 and aspartate 16. Histidine 197 is a Zn(2+) binding site. Glutamate 200 acts as the Proton donor in catalysis. Zn(2+) is bound at residue aspartate 278.

The protein belongs to the metallo-dependent hydrolases superfamily. Adenosine and AMP deaminases family. Adenosine deaminase subfamily. Requires Zn(2+) as cofactor.

The enzyme catalyses adenosine + H2O + H(+) = inosine + NH4(+). It carries out the reaction 2'-deoxyadenosine + H2O + H(+) = 2'-deoxyinosine + NH4(+). Its function is as follows. Catalyzes the hydrolytic deamination of adenosine and 2-deoxyadenosine. In Shewanella pealeana (strain ATCC 700345 / ANG-SQ1), this protein is Adenosine deaminase.